A 191-amino-acid chain; its full sequence is Lipid A acyltransferase PagP (191 aa).

Positions 1–23 (MRLFYQRISLLISLCGFFSAAWA) are cleaved as a signal peptide. Active-site residues include His-62, Asp-105, and Ser-106.

It belongs to the lipid A palmitoyltransferase family. As to quaternary structure, homodimer.

It is found in the cell outer membrane. It carries out the reaction a lipid A + a 1,2-diacyl-sn-glycero-3-phosphocholine = a hepta-acyl lipid A + a 2-acyl-sn-glycero-3-phosphocholine. The enzyme catalyses a lipid IVA + a 1,2-diacyl-sn-glycero-3-phosphocholine = a lipid IVB + a 2-acyl-sn-glycero-3-phosphocholine. It catalyses the reaction a lipid IIA + a 1,2-diacyl-sn-glycero-3-phosphocholine = a lipid IIB + a 2-acyl-sn-glycero-3-phosphocholine. Transfers a fatty acid residue from the sn-1 position of a phospholipid to the N-linked hydroxyfatty acid chain on the proximal unit of lipid A or its precursors. This chain is Lipid A acyltransferase PagP, found in Sodalis glossinidius (strain morsitans).